Here is a 487-residue protein sequence, read N- to C-terminus: GTPase Der (487 aa).

2 EngA-type G domains span residues 3 to 167 (FTLA…EGFA) and 203 to 378 (LQIA…DIWN). Residues 9–16 (GRPNVGKS), 56–60 (DTAGL), 119–122 (NKAE), 209–216 (GRPNAGKS), 256–260 (DTAGM), and 321–324 (NKWD) contribute to the GTP site. One can recognise a KH-like domain in the interval 379–463 (RRITTARLNS…PIRLTMRGQG (85 aa)). The interval 459–487 (MRGQGDKNPFKERKFRTPSRLRKHLGKKG) is disordered. Residues 471 to 487 (RKFRTPSRLRKHLGKKG) are compositionally biased toward basic residues.

The protein belongs to the TRAFAC class TrmE-Era-EngA-EngB-Septin-like GTPase superfamily. EngA (Der) GTPase family. As to quaternary structure, associates with the 50S ribosomal subunit.

Functionally, GTPase that plays an essential role in the late steps of ribosome biogenesis. In Cereibacter sphaeroides (strain ATCC 17025 / ATH 2.4.3) (Rhodobacter sphaeroides), this protein is GTPase Der.